We begin with the raw amino-acid sequence, 145 residues long: Large ribosomal subunit protein uL11 (145 aa).

Belongs to the universal ribosomal protein uL11 family. Part of the ribosomal stalk of the 50S ribosomal subunit. Interacts with L10 and the large rRNA to form the base of the stalk. L10 forms an elongated spine to which L12 dimers bind in a sequential fashion forming a multimeric L10(L12)X complex. In terms of processing, one or more lysine residues are methylated.

Forms part of the ribosomal stalk which helps the ribosome interact with GTP-bound translation factors. The chain is Large ribosomal subunit protein uL11 from Rickettsia typhi (strain ATCC VR-144 / Wilmington).